The sequence spans 563 residues: Arginine--tRNA ligase (563 aa).

The short motif at 121–131 is the 'HIGH' region element; sequence PNIAKPFSIGH.

Belongs to the class-I aminoacyl-tRNA synthetase family. Monomer.

It is found in the cytoplasm. It carries out the reaction tRNA(Arg) + L-arginine + ATP = L-arginyl-tRNA(Arg) + AMP + diphosphate. In Streptococcus pyogenes serotype M3 (strain ATCC BAA-595 / MGAS315), this protein is Arginine--tRNA ligase.